The primary structure comprises 180 residues: Minor allergen Can f 2 (180 aa).

A signal peptide spans 1–18 (MQLLLLTVGLALICGLQA). N-linked (GlcNAc...) asparagine glycosylation is present at asparagine 45. A disulfide bridge links cysteine 82 with cysteine 175.

It belongs to the calycin superfamily. Lipocalin family. Tongue epithelial tissue and parotid gland.

It localises to the secreted. The chain is Minor allergen Can f 2 from Canis lupus familiaris (Dog).